The primary structure comprises 531 residues: Putative lipase ATG15 (531 aa).

Residues Met-1 to Tyr-11 are Cytoplasmic-facing. A helical; Signal-anchor for type II membrane protein membrane pass occupies residues Ser-12–Ile-31. The Lumenal portion of the chain corresponds to Asn-32–Ile-531. 2 N-linked (GlcNAc...) asparagine glycosylation sites follow: Asn-178 and Asn-207. Catalysis depends on Ser-340, which acts as the Charge relay system. Residues Val-482 to Thr-513 are disordered. Residues Ser-489 to Thr-502 are compositionally biased toward low complexity.

It belongs to the AB hydrolase superfamily. Lipase family. In terms of assembly, binds to both phosphatidylinositol (PI) and phosphatidylinositol 3,5-bisphosphate (PIP2).

Its subcellular location is the endosome. The protein resides in the multivesicular body membrane. The protein localises to the prevacuolar compartment membrane. It carries out the reaction a triacylglycerol + H2O = a diacylglycerol + a fatty acid + H(+). Its function is as follows. Lipase which is essential for lysis of subvacuolar cytoplasm to vacuole targeted bodies and intravacuolar autophagic bodies. Involved in the lysis of intravacuolar multivesicular body (MVB) vesicles. The intravacuolar membrane disintegration by ATG15 is critical to life span extension. The chain is Putative lipase ATG15 (ATG15) from Kluyveromyces lactis (strain ATCC 8585 / CBS 2359 / DSM 70799 / NBRC 1267 / NRRL Y-1140 / WM37) (Yeast).